A 360-amino-acid polypeptide reads, in one-letter code: Type II methyltransferase M.BglII (360 aa).

Positions 316–341 (TRQRKGSKPSLDSKAHPEEHHKKEIV) are disordered. Residues 326-341 (LDSKAHPEEHHKKEIV) are compositionally biased toward basic and acidic residues.

Belongs to the N(4)/N(6)-methyltransferase family. N(4) subfamily.

It carries out the reaction a 2'-deoxycytidine in DNA + S-adenosyl-L-methionine = an N(4)-methyl-2'-deoxycytidine in DNA + S-adenosyl-L-homocysteine + H(+). A beta subtype methylase, recognizes the double-stranded sequence 5'-AGATCT-3', methylates C-5 on both strands, and protects the DNA from cleavage by the BglII endonuclease. This is Type II methyltransferase M.BglII from Bacillus subtilis.